A 262-amino-acid polypeptide reads, in one-letter code: Abhydrolase domain-containing protein ACTT2-2 (262 aa).

The Peroxisomal targeting signal type 1 signature appears at 260–262 (SKL).

This sequence belongs to the AB hydrolase superfamily. AKT2 hydrolase family.

The protein localises to the peroxisome. It participates in mycotoxin biosynthesis. In terms of biological role, abhydrolase domain-containing protein; part of the gene clusters that mediate the biosynthesis of the host-selective toxins (HSTs) ACT-toxins responsible for brown spot of tangerine disease by the tangerine pathotype which affects tangerines and mandarins. ACT-toxins consist of three moieties, 9,10-epoxy-8-hydroxy-9-methyl-decatrienoic acid (EDA), valine and a polyketide. ACT-toxin I is toxic to both citrus and pear; toxin II the 5''-deoxy derivative of ACT-toxin I, is highly toxic to pear and slightly toxic to citrus. On cellular level, ACT-toxins affect plasma membrane of susceptible cells and cause a sudden increase in loss of K(+) after a few minutes of toxin treatment. The acyl-CoA ligase ACTT1, the hydrolase ACTT2, the enoyl-CoA hydratases ACTT3 and ACTT6, and the acyl-CoA synthetase ACTT5 are all involved in the biosynthesis of the AK-, AF- and ACT-toxin common 9,10-epoxy-8-hydroxy-9-methyl-decatrienoic acid (EDA) structural moiety. The exact role of each enzyme, and of additional enzymes identified within the AF-toxin clusters have still to be determined. On the other hand, ACTTS1 to ACTTS4 are specific to the tangerine pathotype. The function of ACTTS3 is to elongate the polyketide chain portion of ACT-toxin that is unique to this toxin. The enoyl-reductase ACTTS2 might complement the missing enoyl-reductase (ER) domain in ACTTS3 in the synthesis of the polyketide portion of ACT-toxin. The roles of the nonribosomal peptide synthetases-related proteins ACTTS1 and ACTTS4 have also still not been elucidated. The chain is Abhydrolase domain-containing protein ACTT2-2 (ACTT2-2) from Alternaria alternata (Alternaria rot fungus).